The chain runs to 279 residues: 5'-nucleotidase SurE (279 aa).

Asp-28, Asp-29, Ser-59, and Asn-113 together coordinate a divalent metal cation.

Belongs to the SurE nucleotidase family. A divalent metal cation is required as a cofactor.

It localises to the cytoplasm. It catalyses the reaction a ribonucleoside 5'-phosphate + H2O = a ribonucleoside + phosphate. In terms of biological role, nucleotidase that shows phosphatase activity on nucleoside 5'-monophosphates. The chain is 5'-nucleotidase SurE from Methanospirillum hungatei JF-1 (strain ATCC 27890 / DSM 864 / NBRC 100397 / JF-1).